The chain runs to 151 residues: 3-hydroxyacyl-[acyl-carrier-protein] dehydratase FabZ (151 aa).

His54 is an active-site residue.

Belongs to the thioester dehydratase family. FabZ subfamily.

Its subcellular location is the cytoplasm. It catalyses the reaction a (3R)-hydroxyacyl-[ACP] = a (2E)-enoyl-[ACP] + H2O. Functionally, involved in unsaturated fatty acids biosynthesis. Catalyzes the dehydration of short chain beta-hydroxyacyl-ACPs and long chain saturated and unsaturated beta-hydroxyacyl-ACPs. The sequence is that of 3-hydroxyacyl-[acyl-carrier-protein] dehydratase FabZ from Blochmanniella pennsylvanica (strain BPEN).